Reading from the N-terminus, the 150-residue chain is Large ribosomal subunit protein bL9 (150 aa).

It belongs to the bacterial ribosomal protein bL9 family.

Its function is as follows. Binds to the 23S rRNA. The polypeptide is Large ribosomal subunit protein bL9 (Burkholderia vietnamiensis (strain G4 / LMG 22486) (Burkholderia cepacia (strain R1808))).